A 978-amino-acid chain; its full sequence is Peroxisomal ATPase PEX6 (978 aa).

Arg119 bears the Omega-N-methylarginine mark. Residues 470–477 (GPPGSGKT) and 742–749 (GPPGTGKT) contribute to the ATP site.

The protein belongs to the AAA ATPase family. Interacts with PEX1; forming the PEX1-PEX6 AAA ATPase complex, which is composed of a heterohexamer formed by a trimer of PEX1-PEX6 dimers. Interacts with PEX26; interaction is direct and promotes recruitment to peroxisomal membranes. Interacts with ZFAND6.

The protein resides in the cytoplasm. It localises to the cytosol. It is found in the peroxisome membrane. The protein localises to the cell projection. Its subcellular location is the cilium. The protein resides in the photoreceptor outer segment. It carries out the reaction ATP + H2O = ADP + phosphate + H(+). Its function is as follows. Component of the PEX1-PEX6 AAA ATPase complex, a protein dislocase complex that mediates the ATP-dependent extraction of the PEX5 receptor from peroxisomal membranes, an essential step for PEX5 recycling. Specifically recognizes PEX5 monoubiquitinated at 'Cys-11', and pulls it out of the peroxisome lumen through the PEX2-PEX10-PEX12 retrotranslocation channel. Extraction by the PEX1-PEX6 AAA ATPase complex is accompanied by unfolding of the TPR repeats and release of bound cargo from PEX5. In Rattus norvegicus (Rat), this protein is Peroxisomal ATPase PEX6.